The sequence spans 800 residues: Phenylalanine--tRNA ligase beta subunit (800 aa).

In terms of domain architecture, tRNA-binding spans 38–147 (GAELKGVVAA…PGTVPGTPIG (110 aa)). The B5 domain occupies 401–477 (VASPEVRMRW…RTLGYDAIPE (77 aa)). Positions 455, 461, 464, and 465 each coordinate Mg(2+). The FDX-ACB domain maps to 708–799 (PRLPAVLRDV…LRERVGAELR (92 aa)).

It belongs to the phenylalanyl-tRNA synthetase beta subunit family. Type 1 subfamily. In terms of assembly, tetramer of two alpha and two beta subunits. Requires Mg(2+) as cofactor.

The protein resides in the cytoplasm. It carries out the reaction tRNA(Phe) + L-phenylalanine + ATP = L-phenylalanyl-tRNA(Phe) + AMP + diphosphate + H(+). The polypeptide is Phenylalanine--tRNA ligase beta subunit (Anaeromyxobacter dehalogenans (strain 2CP-C)).